Here is a 304-residue protein sequence, read N- to C-terminus: N-acetylmuramic acid 6-phosphate etherase (304 aa).

An SIS domain is found at 57-220; that stretch reads AVKGLSAGGR…STATMVGLGK (164 aa). The active-site Proton donor is Glu-85. Glu-116 is an active-site residue.

Belongs to the GCKR-like family. MurNAc-6-P etherase subfamily. As to quaternary structure, homodimer.

It carries out the reaction N-acetyl-D-muramate 6-phosphate + H2O = N-acetyl-D-glucosamine 6-phosphate + (R)-lactate. It participates in amino-sugar metabolism; N-acetylmuramate degradation. Specifically catalyzes the cleavage of the D-lactyl ether substituent of MurNAc 6-phosphate, producing GlcNAc 6-phosphate and D-lactate. The protein is N-acetylmuramic acid 6-phosphate etherase of Cutibacterium acnes (strain DSM 16379 / KPA171202) (Propionibacterium acnes).